The sequence spans 508 residues: Photosystem II CP47 reaction center protein (508 aa).

6 helical membrane passes run 21–36 (AVHI…WAGS), 101–115 (ILFS…IWHW), 140–156 (GIHL…FGAF), 203–218 (IAAG…FHLS), 237–252 (VLSS…AFVV), and 457–472 (SFAL…HGAR).

The protein belongs to the PsbB/PsbC family. PsbB subfamily. As to quaternary structure, PSII is composed of 1 copy each of membrane proteins PsbA, PsbB, PsbC, PsbD, PsbE, PsbF, PsbH, PsbI, PsbJ, PsbK, PsbL, PsbM, PsbT, PsbX, PsbY, PsbZ, Psb30/Ycf12, at least 3 peripheral proteins of the oxygen-evolving complex and a large number of cofactors. It forms dimeric complexes. It depends on Binds multiple chlorophylls. PSII binds additional chlorophylls, carotenoids and specific lipids. as a cofactor.

It is found in the plastid. Its subcellular location is the chloroplast thylakoid membrane. Its function is as follows. One of the components of the core complex of photosystem II (PSII). It binds chlorophyll and helps catalyze the primary light-induced photochemical processes of PSII. PSII is a light-driven water:plastoquinone oxidoreductase, using light energy to abstract electrons from H(2)O, generating O(2) and a proton gradient subsequently used for ATP formation. This chain is Photosystem II CP47 reaction center protein, found in Oenothera argillicola (Appalachian evening primrose).